A 695-amino-acid chain; its full sequence is Protein EARLY FLOWERING 3 (695 aa).

The span at 1–11 (MKRGKDEEKIL) shows a compositional bias: basic and acidic residues. Disordered stretches follow at residues 1–33 (MKRG…APPR), 48–75 (RFGD…SQPC), 136–159 (RSQS…VAPS), 216–283 (EKSA…REYS), and 541–653 (CSSQ…QTTR). The span at 54–74 (TMNSRSNNTSTLVHPGPSSQP) shows a compositional bias: polar residues. Composition is skewed to basic and acidic residues over residues 216–226 (EKSASSHDRVN), 234–253 (QESR…KDTD), and 260–283 (LATE…REYS). The interaction with ELF3 stretch occupies residues 261 to 484 (ATENHSQEGH…VMSPSEGLIY (224 aa)). Polar residues-rich tracts occupy residues 551 to 567 (PNEQ…LQNT) and 579 to 588 (APQQQQQPTK). Low complexity-rich tracts occupy residues 598–616 (QGST…GSKS) and 636–653 (TMTT…QTTR).

Interacts specifically with both Pr and Pfr forms of phytochrome B. Interacts with ELF4. May form a homodimer.

The protein resides in the nucleus. Its function is as follows. May be a transcription factor part of a circadian clock input pathway. Acts within a 'zeitnehmer' feedback loop and is involved in its own circadian regulation. Has no role in regulating circadian clock function in the dark. Part of a corepressor complex consisting of ELF4, ELF3, and LUX involved in the transcriptional regulation of APRR9. The activity of the protein may be decreased in long day conditions due to its interaction with phytochrome B (phyB). Can regulate the initiation of flowering independently of phyB. Also involved in responses to nematode parasitism, like the formation of the nematode feeding structure. This Arabidopsis thaliana (Mouse-ear cress) protein is Protein EARLY FLOWERING 3 (ELF3).